A 274-amino-acid chain; its full sequence is Type II restriction enzyme HgiEI (274 aa).

The protein belongs to the TdeIII type II restriction endonuclease family.

It catalyses the reaction Endonucleolytic cleavage of DNA to give specific double-stranded fragments with terminal 5'-phosphates.. Functionally, a P subtype restriction enzyme that recognizes the double-stranded sequence 5'-GGWCC-3' and cleaves after G-1. This system is more active than isoschizomeric RM.HgiBI. This is Type II restriction enzyme HgiEI from Herpetosiphon aurantiacus (Herpetosiphon giganteus).